A 616-amino-acid polypeptide reads, in one-letter code: Chaperone protein HscA (616 aa).

The protein belongs to the heat shock protein 70 family.

In terms of biological role, chaperone involved in the maturation of iron-sulfur cluster-containing proteins. Has a low intrinsic ATPase activity which is markedly stimulated by HscB. Involved in the maturation of IscU. This is Chaperone protein HscA from Escherichia coli O139:H28 (strain E24377A / ETEC).